Here is a 434-residue protein sequence, read N- to C-terminus: Probable transcription factor HMS1 (434 aa).

A bHLH domain is found at 266-341 (TGRVSHNIIE…TKSIEYICHL (76 aa)). Positions 365 to 434 (HLTEPSQPLS…DMDFNNAGDF (70 aa)) are disordered. 2 stretches are compositionally biased toward polar residues: residues 368-382 (EPSQ…SEQV) and 402-423 (PLHN…TNNS).

Interacts with the G1/S-specific cyclin PCL1. In terms of processing, phosphorylated by the cyclin-CDK complex PCL1-PHO85.

The protein localises to the nucleus. In terms of biological role, involved in exit from mitosis and pseudohyphal differentiation. In Saccharomyces cerevisiae (strain ATCC 204508 / S288c) (Baker's yeast), this protein is Probable transcription factor HMS1 (HMS1).